The chain runs to 322 residues: Cytochrome c biogenesis protein CcsA (322 aa).

Transmembrane regions (helical) follow at residues Leu6–Phe26, Leu45–Phe65, Asn69–Tyr89, Leu97–Leu117, Met144–Leu164, Leu230–Asn250, Trp265–Trp285, and Ala291–Leu311.

This sequence belongs to the CcmF/CycK/Ccl1/NrfE/CcsA family. May interact with Ccs1.

Its subcellular location is the plastid. It localises to the cyanelle thylakoid membrane. Required during biogenesis of c-type cytochromes (cytochrome c6 and cytochrome f) at the step of heme attachment. The sequence is that of Cytochrome c biogenesis protein CcsA from Cyanophora paradoxa.